A 291-amino-acid polypeptide reads, in one-letter code: Lys-63-specific deubiquitinase BRCC36-like (291 aa).

The region spanning 12–179 is the MPN domain; that stretch reads VYLESDAFLV…YTCFQSVQAS (168 aa). Zn(2+) contacts are provided by His122, His124, and Asp135. The JAMM motif signature appears at 122–135; it reads HSHPHITVWPSHVD. Positions 259–286 form a coiled coil; the sequence is LQWLEDRLEQNQQRLQELEQEKEDLMEE.

This sequence belongs to the peptidase M67A family. BRCC36 subfamily.

Its function is as follows. Metalloprotease that specifically cleaves 'Lys-63'-linked polyubiquitin chains. In Mus musculus (Mouse), this protein is Lys-63-specific deubiquitinase BRCC36-like.